The sequence spans 539 residues: Chaperonin GroEL (539 aa).

ATP-binding positions include 29–32 (TLGP), 86–90 (DGTTT), glycine 413, 479–481 (DAL), and aspartate 495.

The protein belongs to the chaperonin (HSP60) family. As to quaternary structure, forms a cylinder of 14 subunits composed of two heptameric rings stacked back-to-back. Interacts with the co-chaperonin GroES.

It localises to the cytoplasm. The catalysed reaction is ATP + H2O + a folded polypeptide = ADP + phosphate + an unfolded polypeptide.. Its function is as follows. Together with its co-chaperonin GroES, plays an essential role in assisting protein folding. The GroEL-GroES system forms a nano-cage that allows encapsulation of the non-native substrate proteins and provides a physical environment optimized to promote and accelerate protein folding. In Pseudothermotoga lettingae (strain ATCC BAA-301 / DSM 14385 / NBRC 107922 / TMO) (Thermotoga lettingae), this protein is Chaperonin GroEL.